A 385-amino-acid chain; its full sequence is Glucans biosynthesis protein C (385 aa).

The next 10 membrane-spanning stretches (helical) occupy residues 17–37 (AWLM…SHTW), 60–80 (MLVF…RYPL), 91–111 (VGIP…IMLQ), 137–157 (ISHL…VWIF), 173–193 (KFSM…YAVI), 212–232 (FIVM…LAFI), 239–259 (LFTT…VAYL), 274–294 (TESV…FSFG), 311–331 (ASLF…AYIT), and 338–358 (WLGF…LYEI).

Belongs to the acyltransferase 3 family. OpgC subfamily.

It localises to the cell membrane. It participates in glycan metabolism; osmoregulated periplasmic glucan (OPG) biosynthesis. Functionally, necessary for the succinyl substitution of periplasmic glucans. Could catalyze the transfer of succinyl residues from the cytoplasmic side of the membrane to the nascent glucan backbones on the periplasmic side of the membrane. The polypeptide is Glucans biosynthesis protein C (Shigella boydii serotype 4 (strain Sb227)).